Consider the following 202-residue polypeptide: 3-isopropylmalate dehydratase small subunit (202 aa).

Belongs to the LeuD family. LeuD type 1 subfamily. In terms of assembly, heterodimer of LeuC and LeuD.

The enzyme catalyses (2R,3S)-3-isopropylmalate = (2S)-2-isopropylmalate. It functions in the pathway amino-acid biosynthesis; L-leucine biosynthesis; L-leucine from 3-methyl-2-oxobutanoate: step 2/4. In terms of biological role, catalyzes the isomerization between 2-isopropylmalate and 3-isopropylmalate, via the formation of 2-isopropylmaleate. The chain is 3-isopropylmalate dehydratase small subunit from Paenarthrobacter aurescens (strain TC1).